The sequence spans 465 residues: tRNA modification GTPase MnmE (465 aa).

Positions 23, 81, and 120 each coordinate (6S)-5-formyl-5,6,7,8-tetrahydrofolate. Residues 217–389 enclose the TrmE-type G domain; that stretch reads GVHVVLAGRP…LIASLCDKVG (173 aa). N227 serves as a coordination point for K(+). GTP-binding positions include 227-232, 246-252, and 271-274; these read NAGKSS, TDVAGTT, and DTAG. Residue S231 coordinates Mg(2+). K(+) is bound by residues T246, V248, and T251. T252 lines the Mg(2+) pocket. K465 provides a ligand contact to (6S)-5-formyl-5,6,7,8-tetrahydrofolate.

Belongs to the TRAFAC class TrmE-Era-EngA-EngB-Septin-like GTPase superfamily. TrmE GTPase family. As to quaternary structure, homodimer. Heterotetramer of two MnmE and two MnmG subunits. Requires K(+) as cofactor.

Its subcellular location is the cytoplasm. In terms of biological role, exhibits a very high intrinsic GTPase hydrolysis rate. Involved in the addition of a carboxymethylaminomethyl (cmnm) group at the wobble position (U34) of certain tRNAs, forming tRNA-cmnm(5)s(2)U34. This is tRNA modification GTPase MnmE from Psychrobacter sp. (strain PRwf-1).